Here is a 229-residue protein sequence, read N- to C-terminus: 1-(5-phosphoribosyl)-5-[(5-phosphoribosylamino)methylideneamino] imidazole-4-carboxamide isomerase (229 aa).

Catalysis depends on Asp8, which acts as the Proton acceptor. Asp125 serves as the catalytic Proton donor.

Belongs to the HisA/HisF family.

Its subcellular location is the cytoplasm. It catalyses the reaction 1-(5-phospho-beta-D-ribosyl)-5-[(5-phospho-beta-D-ribosylamino)methylideneamino]imidazole-4-carboxamide = 5-[(5-phospho-1-deoxy-D-ribulos-1-ylimino)methylamino]-1-(5-phospho-beta-D-ribosyl)imidazole-4-carboxamide. Its pathway is amino-acid biosynthesis; L-histidine biosynthesis; L-histidine from 5-phospho-alpha-D-ribose 1-diphosphate: step 4/9. In Thermococcus onnurineus (strain NA1), this protein is 1-(5-phosphoribosyl)-5-[(5-phosphoribosylamino)methylideneamino] imidazole-4-carboxamide isomerase.